The chain runs to 158 residues: Phosphopantetheine adenylyltransferase (158 aa).

Substrate is bound at residue T9. Residues 9-10 (TF) and H17 each bind ATP. Substrate-binding residues include K41, L73, and R87. ATP-binding positions include 88 to 90 (GLR), E98, and 123 to 129 (YAYISSS).

The protein belongs to the bacterial CoaD family. Homohexamer. Requires Mg(2+) as cofactor.

Its subcellular location is the cytoplasm. It catalyses the reaction (R)-4'-phosphopantetheine + ATP + H(+) = 3'-dephospho-CoA + diphosphate. It participates in cofactor biosynthesis; coenzyme A biosynthesis; CoA from (R)-pantothenate: step 4/5. In terms of biological role, reversibly transfers an adenylyl group from ATP to 4'-phosphopantetheine, yielding dephospho-CoA (dPCoA) and pyrophosphate. The sequence is that of Phosphopantetheine adenylyltransferase from Allochromatium vinosum (strain ATCC 17899 / DSM 180 / NBRC 103801 / NCIMB 10441 / D) (Chromatium vinosum).